Here is a 508-residue protein sequence, read N- to C-terminus: Early growth response protein 1 (508 aa).

2 disordered regions span residues 18–78 and 136–210; these read PQFL…ESFS and MTNP…QYPP. Residues 33-42 are compositionally biased toward low complexity; it reads NNSSSSSSSS. Over residues 43–52 the composition is skewed to gly residues; that stretch reads SGGGGGGGSN. Positions 139-164 are enriched in low complexity; the sequence is PPTSSSSAPSPAASSSSSASQSPPLS. Residue Lys278 forms a Glycyl lysine isopeptide (Lys-Gly) (interchain with G-Cter in SUMO2) linkage. Residues 292 to 311 are disordered; sequence SRMRKYPNRPSKTPPHERPY. 3 consecutive C2H2-type zinc fingers follow at residues 311 to 335, 341 to 363, and 369 to 391; these read YACPVESCDRRFSRSDELTRHIRIH, FQCRICMRNFSRSDHLTTHIRTH, and FACDICGRKFARSDERKRHTKIH. The interval 382–453 is disordered; sequence DERKRHTKIH…SSTYPSPAHS (72 aa). Positions 386 to 396 are enriched in basic residues; that stretch reads RHTKIHLRQKD. A compositionally biased stretch (low complexity) spans 402-450; it reads SVVASSAASSLSSYPSPVATSYPSPATTSFPSPVPTSYSSPGSSTYPSP. 7 consecutive repeat copies span residues 413 to 420, 421 to 428, 429 to 436, 437 to 444, 445 to 452, 453 to 460, and 462 to 468. The segment at 413-468 is 7 X 8 AA tandem repeats of [TS](2)-[FY]-[PS]-S-P-[GSAV]-X; the sequence is SSYPSPVATSYPSPATTSFPSPVPTSYSSPGSSTYPSPAHSGFPSPSVATTYASVP.

This sequence belongs to the EGR C2H2-type zinc-finger protein family. As to quaternary structure, interacts with SNAI1 and SP1 upon 12-O-tetradecanoylphorbol-13-acetate (TPA) induction. In terms of tissue distribution, detected in kidney thick ascending limbs and collecting ducts (at protein level).

The protein resides in the nucleus. Its subcellular location is the cytoplasm. Functionally, transcriptional regulator. Recognizes and binds to the DNA sequence 5'-GCG(T/G)GGGCG-3'(EGR-site) in the promoter region of target genes. Binds double-stranded target DNA, irrespective of the cytosine methylation status. Regulates the transcription of numerous target genes, and thereby plays an important role in regulating the response to growth factors, DNA damage, and ischemia. Plays a role in the regulation of cell survival, proliferation and cell death. Activates expression of p53/TP53 and TGFB1, and thereby helps prevent tumor formation. Required for normal progress through mitosis and normal proliferation of hepatocytes after partial hepatectomy. Mediates responses to ischemia and hypoxia; regulates the expression of proteins such as IL1B and CXCL2 that are involved in inflammatory processes and development of tissue damage after ischemia. Regulates biosynthesis of luteinizing hormone (LHB) in the pituitary. Regulates the amplitude of the expression rhythms of clock genes: BMAL1, PER2 and NR1D1 in the liver via the activation of PER1 (clock repressor) transcription. Regulates the rhythmic expression of core-clock gene BMAL1 in the suprachiasmatic nucleus (SCN). Regulates biosynthesis of glucocorticoid receptor GR/NR3C1 in the hippocampus and thereby may play a role in the behavioral and hypothalamic-pituitary-adrenal responses to stress in offspring. The chain is Early growth response protein 1 (Egr1) from Rattus norvegicus (Rat).